A 62-amino-acid chain; its full sequence is Photosystem II reaction center protein Z (62 aa).

Helical transmembrane passes span 8–28 (ALFA…VVLA) and 41–61 (FSGI…NSFV).

The protein belongs to the PsbZ family. As to quaternary structure, PSII is composed of 1 copy each of membrane proteins PsbA, PsbB, PsbC, PsbD, PsbE, PsbF, PsbH, PsbI, PsbJ, PsbK, PsbL, PsbM, PsbT, PsbY, PsbZ, Psb30/Ycf12, at least 3 peripheral proteins of the oxygen-evolving complex and a large number of cofactors. It forms dimeric complexes.

The protein localises to the plastid. The protein resides in the chloroplast thylakoid membrane. Functionally, may control the interaction of photosystem II (PSII) cores with the light-harvesting antenna, regulates electron flow through the 2 photosystem reaction centers. PSII is a light-driven water plastoquinone oxidoreductase, using light energy to abstract electrons from H(2)O, generating a proton gradient subsequently used for ATP formation. The protein is Photosystem II reaction center protein Z of Chlorella vulgaris (Green alga).